A 538-amino-acid chain; its full sequence is MTDLNKVVKELEALGIYDVKEVVYNPSYEQLFEEETKPGLEGFEKGTLTTTGAVAVDTGIFTGRSPKDKYIVLDEKTKDTVWWTSETAKNDNKPMNQATWQSLKDLVTNQLSRKRLFVVDGFCGASEHDRIAVRIVTEVAWQAHFVKNMFIRPTEEQLKNFEPDFVVMNGSKVTNPNWKEQGLNSENFVAFNLTERIQLIGGTWYGGEMKKGMFSMMNYFLPLKGVGAMHCSANVGKDGDVAIFFGLSGTGKTTLSTDPKRELIGDDEHGWDDVGIFNFEGGCYAKTIHLSEENEPDIYHAIRRDALLENVVVRSDGSVDFDDGSKTENTRVSYPIYHIDNIVKPVSRAGHATKVIFLTADAFGVLPPVSKLTPEQTKYYFLSGFTAKLAGTERGITEPTPTFSACFGAAFLTLHPTQYAEVLVKRMQAAGAEAYLVNTGWNGTGKRISIKDTRGIIDAILDGSIEKAEMGELPIFNLAIPKALPGVDSAILDPRDTYADKAQWQSKAEDLAGRFVKNFVKYATNEEGKALIAAGPKA.

Substrate-binding residues include Arg-64, Tyr-205, and Lys-211. Residues Lys-211, His-230, and 246–254 each bind ATP; that span reads GLSGTGKTT. Mn(2+) is bound by residues Lys-211 and His-230. Asp-267 lines the Mn(2+) pocket. ATP-binding positions include Glu-295, Arg-331, 447-448, and Thr-453; that span reads RI. Residue Arg-331 participates in substrate binding.

It belongs to the phosphoenolpyruvate carboxykinase (ATP) family. In terms of assembly, monomer. Requires Mn(2+) as cofactor.

The protein resides in the cytoplasm. The enzyme catalyses oxaloacetate + ATP = phosphoenolpyruvate + ADP + CO2. It participates in carbohydrate biosynthesis; gluconeogenesis. In terms of biological role, involved in the gluconeogenesis. Catalyzes the conversion of oxaloacetate (OAA) to phosphoenolpyruvate (PEP) through direct phosphoryl transfer between the nucleoside triphosphate and OAA. In Haemophilus influenzae (strain 86-028NP), this protein is Phosphoenolpyruvate carboxykinase (ATP).